Reading from the N-terminus, the 299-residue chain is Xyloglucan endotransglucosylase protein 6 (299 aa).

The N-terminal stretch at 1–25 (MASSLTLPMAMAFTLLALSFASAMG) is a signal peptide. The 194-residue stretch at 26–219 (GSMNSSRFDE…WSHAPFVASY (194 aa)) folds into the GH16 domain. The Nucleophile role is filled by Glu105. Glu109 functions as the Proton donor in the catalytic mechanism. Glu109 is a binding site for xyloglucan. Asn113 carries an N-linked (GlcNAc...) asparagine glycan. Residues 122-124 (QTN), 132-134 (NRE), 198-199 (DW), and Gly203 each bind xyloglucan. 2 disulfide bridges follow: Cys227-Cys242 and Cys281-Cys294. Residue Arg286 participates in xyloglucan binding.

Belongs to the glycosyl hydrolase 16 family. XTH group 1 subfamily. In terms of processing, contains at least one intrachain disulfide bond essential for its enzymatic activity. Highest expression in ripe leaves after full expansion. Also expressed in fruits, and at a lower level in flowers and stems (picked at anthesis).

It localises to the secreted. The protein resides in the cell wall. Its subcellular location is the extracellular space. The protein localises to the apoplast. It catalyses the reaction breaks a beta-(1-&gt;4) bond in the backbone of a xyloglucan and transfers the xyloglucanyl segment on to O-4 of the non-reducing terminal glucose residue of an acceptor, which can be a xyloglucan or an oligosaccharide of xyloglucan.. Functionally, catalyzes xyloglucan endotransglycosylation (XET). Cleaves and religates xyloglucan polymers. Does not catalyze xyloglucan endohydrolysis (XEH). Probably involved in cell wall restructuring during postharvest fruit softening. This chain is Xyloglucan endotransglucosylase protein 6, found in Diospyros kaki (Kaki persimmon).